A 150-amino-acid polypeptide reads, in one-letter code: Transcriptional repressor NrdR (150 aa).

Residues 3-34 (CPFCGYEETKVLDSRPVSNGTSIRRRRECLQC) fold into a zinc finger. Residues 49-139 (IRIIKKDGRR…VYKEFRDLDS (91 aa)) form the ATP-cone domain.

The protein belongs to the NrdR family. Requires Zn(2+) as cofactor.

In terms of biological role, negatively regulates transcription of bacterial ribonucleotide reductase nrd genes and operons by binding to NrdR-boxes. The protein is Transcriptional repressor NrdR of Petrotoga mobilis (strain DSM 10674 / SJ95).